The sequence spans 563 residues: Endoglucanase B (563 aa).

The segment at residues 1-27 (MKKFLVLLIALIMIATLLVVPGVQTSA) is a signal peptide (or 31). The Proton donor role is filled by glutamate 204. Glutamate 363 (nucleophile) is an active-site residue. A disordered region spans residues 476 to 495 (SVTPSPSATPSPTTITAPPT). The 67-residue stretch at 496–562 (DTVTYGDVNG…VLRSISELPY (67 aa)) folds into the Dockerin domain.

It belongs to the glycosyl hydrolase 5 (cellulase A) family.

The catalysed reaction is Endohydrolysis of (1-&gt;4)-beta-D-glucosidic linkages in cellulose, lichenin and cereal beta-D-glucans.. Its function is as follows. This enzyme catalyzes the endohydrolysis of 1,4-beta-glucosidic linkages in cellulose, lichenin and cereal beta-D-glucans. The protein is Endoglucanase B (celB) of Acetivibrio thermocellus (strain ATCC 27405 / DSM 1237 / JCM 9322 / NBRC 103400 / NCIMB 10682 / NRRL B-4536 / VPI 7372) (Clostridium thermocellum).